The chain runs to 483 residues: Cytochrome P450 monooxygenase stcF (483 aa).

Cys424 contacts heme.

This sequence belongs to the cytochrome P450 family. Heme is required as a cofactor.

The protein operates within mycotoxin biosynthesis; sterigmatocystin biosynthesis. Its function is as follows. Cytochrome P450 monooxygenase; part of the gene cluster that mediates the biosynthesis of sterigmatocystin (ST), a polyketide-derived furanocoumarin which is part of the most toxic and carcinogenic compounds among the known mycotoxins. The first step in the biosynthesis of sterigmatocystin is the production of hexanoate by the fatty acid synthase (FAS) units stcJ and stcK. The polyketide backbone is assembled by the non-reducing polyketide synthase stcA by condensation of the starter hexanoyl-CoA and 7 malonyl-CoA extender units followed by cyclization and release of norsolorinic acid. Norsolorinic acid is the first stable intermediate in the biosynthesis of sterigmatocystin and is converted into averantin (AVN) by the ketoreductase stcE which reduces the hexanoate ketone to an alcohol. Averantin is then oxidized into 5'-hydroxyaverantin (HAVN) by the cytochrome P450 monooxygenase stcF. 5'-hydroxyaverantin is further converted to 5'-oxyaverantin (OAVN) by the 5'-hydroxyaverantin dehydrogenase stcG. The next step is the conversion of OAVN into averufin (AVF) which is catalyzed by a yet to be identified enzyme. The cytochrome P450 monooxygenase stcB and the flavin-binding monooxygenase stcW are both required for the conversion of averufin to 1-hydroxyversicolorone. The esterase stcI probably catalyzes the formation of versiconal hemiacetal acetate from 1-hydroxyversicolorone. The oxydoreductase stcN then probably catalyzes the biosynthetic step from versiconal to versicolorin B (VERB). The next step is performed by the versicolorin B desaturase stcL to produce versicolorin A (VERA). The ketoreductase stcU and the cytochrome P450 monooxygenase stcS are involved in the conversion of versicolorin A to demethylsterigmatocystin. The Baeyer-Villiger oxidas stcQ and the reductase stcR might be involved in the biosynthetic step from versicolorin A to demethylsterigmatocystin. The final step in the biosynthesis of sterigmatocystin is the methylation of demethylsterigmatocystin catalyzed by the methyltransferase stcP. The polypeptide is Cytochrome P450 monooxygenase stcF (Emericella nidulans (strain FGSC A4 / ATCC 38163 / CBS 112.46 / NRRL 194 / M139) (Aspergillus nidulans)).